Here is a 542-residue protein sequence, read N- to C-terminus: CTP synthase (542 aa).

The tract at residues 1 to 266 is amidoligase domain; that stretch reads MATNYIFVTG…DDFICQRFHL (266 aa). Serine 14 contacts CTP. UTP is bound at residue serine 14. Residues 15–20 and aspartate 72 each bind ATP; that span reads SLGKGI. Positions 72 and 140 each coordinate Mg(2+). CTP is bound by residues 147-149, 187-192, and lysine 223; these read DIE and KTKPTQ. UTP-binding positions include 187 to 192 and lysine 223; that span reads KTKPTQ. 239 to 241 serves as a coordination point for ATP; that stretch reads KDV. One can recognise a Glutamine amidotransferase type-1 domain in the interval 291–542; sequence VIGMVGKYTE…VKAAKDNQKK (252 aa). Glycine 352 contacts L-glutamine. The active-site Nucleophile; for glutamine hydrolysis is cysteine 379. L-glutamine-binding positions include 380–383, glutamate 403, and arginine 470; that span reads LGMQ. Residues histidine 515 and glutamate 517 contribute to the active site.

Belongs to the CTP synthase family. As to quaternary structure, homotetramer.

The enzyme catalyses UTP + L-glutamine + ATP + H2O = CTP + L-glutamate + ADP + phosphate + 2 H(+). It catalyses the reaction L-glutamine + H2O = L-glutamate + NH4(+). It carries out the reaction UTP + NH4(+) + ATP = CTP + ADP + phosphate + 2 H(+). It functions in the pathway pyrimidine metabolism; CTP biosynthesis via de novo pathway; CTP from UDP: step 2/2. Allosterically activated by GTP, when glutamine is the substrate; GTP has no effect on the reaction when ammonia is the substrate. The allosteric effector GTP functions by stabilizing the protein conformation that binds the tetrahedral intermediate(s) formed during glutamine hydrolysis. Inhibited by the product CTP, via allosteric rather than competitive inhibition. Functionally, catalyzes the ATP-dependent amination of UTP to CTP with either L-glutamine or ammonia as the source of nitrogen. Regulates intracellular CTP levels through interactions with the four ribonucleotide triphosphates. The protein is CTP synthase of Pasteurella multocida (strain Pm70).